Here is a 253-residue protein sequence, read N- to C-terminus: Phosphate import ATP-binding protein PstB (253 aa).

Residues 5 to 248 enclose the ABC transporter domain; that stretch reads IETVNLNVYY…PEHELTEKYV (244 aa). ATP is bound at residue 37–44; sequence GPSGCGKS.

The protein belongs to the ABC transporter superfamily. Phosphate importer (TC 3.A.1.7) family. In terms of assembly, the complex is composed of two ATP-binding proteins (PstB), two transmembrane proteins (PstC and PstA) and a solute-binding protein (PstS).

It is found in the cell membrane. It catalyses the reaction phosphate(out) + ATP + H2O = ADP + 2 phosphate(in) + H(+). In terms of biological role, part of the ABC transporter complex PstSACB involved in phosphate import. Responsible for energy coupling to the transport system. The polypeptide is Phosphate import ATP-binding protein PstB (Thermococcus kodakarensis (strain ATCC BAA-918 / JCM 12380 / KOD1) (Pyrococcus kodakaraensis (strain KOD1))).